Reading from the N-terminus, the 650-residue chain is MGKIIGIDLGTTNSCVAIMEGNQVKVIENSEGARTTPSIIAYMDDNEVLVGAPAKRQSVTNPKNTLFAVKRLIGRRFEEKEVQKDIGLMPYAIIKADNGDAWVEAHGEKLAPPQVSAEVLRKMKKTAEDYLGEPVTEAVITVPAYFNDSQRQATKDAGRIAGLEVKRIINEPTAAALAFGLDKAEKGDRKIAVYDLGGGTFDVSIIEIADVDGEMQFEVLSTNGDTFLGGEDFDQRIIDYIIGEFKKEQGVDLSKDVLALQRLKEAAEKAKIELSSSQQTEINLPYITADASGPKHLNLKVTRAKLEALVEDLVERTIEPCRTAIKDAGVKVSDIDDVILVGGQTRMPKVQEKVKEFFGKEPRRDVNPDEAVAVGAAIQGQVLSGDRKDVLLLDVTPLSLGIETLGGVMTKMINKNTTIPTKHAQVYSTADDNQGAVTIKVFQGEREMAAGNKLLGEFNLEGIPPAPRGVPQIEVTFDIDANGILHVGAKDKATGKENKITIKANSGLSEAEIEKMVKDAEANAAEDHKLRELAESRNQGDALVHSTKKALTEYGDKLEAGEKEKIEAALKELEDVLKNASSDKAAIDAKVEAVATASQKLGEKMYADMQAQQAGAAGAAGAAAEGASAQGGAQPADDVVDADFKEVKKD.

Threonine 200 carries the post-translational modification Phosphothreonine; by autocatalysis. Positions 611 to 636 are enriched in low complexity; it reads AQQAGAAGAAGAAAEGASAQGGAQPA. Residues 611–650 form a disordered region; sequence AQQAGAAGAAGAAAEGASAQGGAQPADDVVDADFKEVKKD.

Belongs to the heat shock protein 70 family.

Its function is as follows. Acts as a chaperone. This is Chaperone protein DnaK from Burkholderia mallei (strain NCTC 10247).